Here is a 338-residue protein sequence, read N- to C-terminus: MREKLEALLSAATAELAHVATEDSLQDLRVKYLGKKGELTAVMKGLGSLSSEERPLIGQIVNKVKTELETRIDAAALQIREAGKAEKLRSERVDVTLPGRRLPVGTRHPITLITEEISDIFAGLGFLVAEGPEIEHDFYNFEALNFPKDHPARDMQDTFFISDTLLLRTHTSPVQVRTMLKQPPPVRIIAPGTVYRCDSDATHSPMFHQIEGLMVDKGITFGDLKGILTNFINQLFGKDTGVRLRPSFFPFTEPSAEVDIACVICKGKGCRVCKNTGWLEILGAGMVDPEVYRHVNYDAEAYTGFAFGMGIERIAMLKYGISDMRLLFENDLRFLKQF.

Glu-253 lines the Mg(2+) pocket.

Belongs to the class-II aminoacyl-tRNA synthetase family. Phe-tRNA synthetase alpha subunit type 1 subfamily. In terms of assembly, tetramer of two alpha and two beta subunits. Mg(2+) is required as a cofactor.

It is found in the cytoplasm. It carries out the reaction tRNA(Phe) + L-phenylalanine + ATP = L-phenylalanyl-tRNA(Phe) + AMP + diphosphate + H(+). This is Phenylalanine--tRNA ligase alpha subunit from Geotalea daltonii (strain DSM 22248 / JCM 15807 / FRC-32) (Geobacter daltonii).